A 622-amino-acid chain; its full sequence is Chaperone protein HscA homolog (622 aa).

This sequence belongs to the heat shock protein 70 family.

Functionally, chaperone involved in the maturation of iron-sulfur cluster-containing proteins. Has a low intrinsic ATPase activity which is markedly stimulated by HscB. The sequence is that of Chaperone protein HscA homolog from Verminephrobacter eiseniae (strain EF01-2).